Reading from the N-terminus, the 195-residue chain is Molybdenum cofactor guanylyltransferase (195 aa).

Residues Leu-12 to Gly-14, Lys-25, Asn-53, Asp-70, and Asp-100 each bind GTP. Asp-100 contacts Mg(2+).

The protein belongs to the MobA family. Monomer. Mg(2+) serves as cofactor.

It is found in the cytoplasm. It catalyses the reaction Mo-molybdopterin + GTP + H(+) = Mo-molybdopterin guanine dinucleotide + diphosphate. Its function is as follows. Transfers a GMP moiety from GTP to Mo-molybdopterin (Mo-MPT) cofactor (Moco or molybdenum cofactor) to form Mo-molybdopterin guanine dinucleotide (Mo-MGD) cofactor. The sequence is that of Molybdenum cofactor guanylyltransferase from Vibrio campbellii (strain ATCC BAA-1116).